A 251-amino-acid polypeptide reads, in one-letter code: Hydroxyacylglutathione hydrolase (251 aa).

Zn(2+)-binding residues include His-53, His-55, Asp-57, His-58, His-110, Asp-127, and His-165.

It belongs to the metallo-beta-lactamase superfamily. Glyoxalase II family. Monomer. Zn(2+) serves as cofactor.

It carries out the reaction an S-(2-hydroxyacyl)glutathione + H2O = a 2-hydroxy carboxylate + glutathione + H(+). It participates in secondary metabolite metabolism; methylglyoxal degradation; (R)-lactate from methylglyoxal: step 2/2. In terms of biological role, thiolesterase that catalyzes the hydrolysis of S-D-lactoyl-glutathione to form glutathione and D-lactic acid. The sequence is that of Hydroxyacylglutathione hydrolase from Salmonella agona (strain SL483).